Here is a 223-residue protein sequence, read N- to C-terminus: Deoxyribose-phosphate aldolase (223 aa).

D89 serves as the catalytic Proton donor/acceptor. The active-site Schiff-base intermediate with acetaldehyde is K152. Catalysis depends on K181, which acts as the Proton donor/acceptor.

Belongs to the DeoC/FbaB aldolase family. DeoC type 1 subfamily.

Its subcellular location is the cytoplasm. It catalyses the reaction 2-deoxy-D-ribose 5-phosphate = D-glyceraldehyde 3-phosphate + acetaldehyde. It functions in the pathway carbohydrate degradation; 2-deoxy-D-ribose 1-phosphate degradation; D-glyceraldehyde 3-phosphate and acetaldehyde from 2-deoxy-alpha-D-ribose 1-phosphate: step 2/2. Its function is as follows. Catalyzes a reversible aldol reaction between acetaldehyde and D-glyceraldehyde 3-phosphate to generate 2-deoxy-D-ribose 5-phosphate. The polypeptide is Deoxyribose-phosphate aldolase (Listeria monocytogenes serotype 4b (strain CLIP80459)).